Here is a 147-residue protein sequence, read N- to C-terminus: Urease accessory protein UreE (147 aa).

The protein belongs to the UreE family.

The protein localises to the cytoplasm. Its function is as follows. Involved in urease metallocenter assembly. Binds nickel. Probably functions as a nickel donor during metallocenter assembly. The polypeptide is Urease accessory protein UreE (Marinomonas sp. (strain MWYL1)).